The following is a 344-amino-acid chain: Glyceraldehyde-3-phosphate dehydrogenase (344 aa).

Residues 11–12 (TI) and Gly-110 contribute to the NAD(+) site. D-glyceraldehyde 3-phosphate is bound at residue 139-141 (SCN). The active-site Nucleophile is the Cys-140. Arg-169 lines the NAD(+) pocket. 195–196 (HG) contributes to the D-glyceraldehyde 3-phosphate binding site. Residue Gln-302 coordinates NAD(+).

The protein belongs to the glyceraldehyde-3-phosphate dehydrogenase family. As to quaternary structure, homotetramer.

It localises to the cytoplasm. It catalyses the reaction D-glyceraldehyde 3-phosphate + phosphate + NADP(+) = (2R)-3-phospho-glyceroyl phosphate + NADPH + H(+). The enzyme catalyses D-glyceraldehyde 3-phosphate + phosphate + NAD(+) = (2R)-3-phospho-glyceroyl phosphate + NADH + H(+). It functions in the pathway carbohydrate degradation; glycolysis; pyruvate from D-glyceraldehyde 3-phosphate: step 1/5. This Pyrobaculum neutrophilum (strain DSM 2338 / JCM 9278 / NBRC 100436 / V24Sta) (Thermoproteus neutrophilus) protein is Glyceraldehyde-3-phosphate dehydrogenase.